Reading from the N-terminus, the 860-residue chain is MQEQYRPEEIESKVQLHWDEKRTFEVTEDESKEKYYCLSMLPYPSGRLHMGHVRNYTIGDVIARYQRMLGKNVLQPIGWDAFGLPAEGAAVKNNTAPAPWTYDNIAYMKNQLKMLGFGYDWSRELATCTPEYYRWEQKFFTELYKKGLVYKKTSAVNWCPNDQTVLANEQVIDGCCWRCDTKVERKEIPQWFIKITAYADELLNDLDKLDHWPDTVKTMQRNWIGRSEGVEITFNVNDYDNTLTVYTTRPDTFMGCTYLAVAAGHPLAQKAAENNPELAAFIDECRNTKVAEAEMATMEKKGVDTGFKAVHPLTGEEIPVWAANFVLMEYGTGAVMAVPGHDQRDYEFASKYGLNIKPVILAADGSEPDLSQQALTEKGVLFNSGEFNGLDHEAAFNAIADKLTAMGVGERKVNYRLRDWGVSRQRYWGAPIPMVTLEDGTVMPTPDDQLPVILPEDVVMDGITSPIKADPEWAKTTVNGMPALRETDTFDTFMESSWYYARYTCPQYKEGMLDSEAANYWLPVDIYIGGIEHAIMHLLYFRFFHKLMRDAGMVNSDEPAKQLLCQGMVLADAFYYVGENGERNWVSPVDAIVERDEKGRIVKAKDAAGHELVYTGMSKMSKSKNNGIDPQVMVERYGADTVRLFMMFASPADMTLEWQESGVEGANRFLKRVWKLVYEHTAKGDVAALNVDALTEDQKALRRDVHKTIAKVTDDIGRRQTFNTAIAAIMELMNKLAKAPTDGEQDRALMQEALLAVVRMLNPFTPHICFTLWQELKGEGDIDNAPWPVADEKAMVEDSTLVVVQVNGKVRAKITVPVDATEEQVRERAGQEHLVAKYLDGVTVRKVIYVPGKLLNLVVG.

A 'HIGH' region motif is present at residues 42–52 (PYPSGRLHMGH). Positions 619-623 (KMSKS) match the 'KMSKS' region motif. Position 622 (lysine 622) interacts with ATP.

This sequence belongs to the class-I aminoacyl-tRNA synthetase family.

It localises to the cytoplasm. It carries out the reaction tRNA(Leu) + L-leucine + ATP = L-leucyl-tRNA(Leu) + AMP + diphosphate. The polypeptide is Leucine--tRNA ligase (Escherichia coli (strain SE11)).